The following is a 165-amino-acid chain: Transcription antitermination protein NusB (165 aa).

A disordered region spans residues 139–165; the sequence is EAVRSHRRNKRPAADKPVATDKPAAAE.

The protein belongs to the NusB family.

Functionally, involved in transcription antitermination. Required for transcription of ribosomal RNA (rRNA) genes. Binds specifically to the boxA antiterminator sequence of the ribosomal RNA (rrn) operons. The sequence is that of Transcription antitermination protein NusB from Laribacter hongkongensis (strain HLHK9).